A 317-amino-acid chain; its full sequence is Tumor-associated calcium signal transducer 2 (317 aa).

The signal sequence occupies residues 1 to 24 (MARGLDLAPLLLLLLAMATRFCTA). Residues 25 to 270 (QSNCTCPTNK…QFSMKRLTAG (246 aa)) lie on the Extracellular side of the membrane. The N-linked (GlcNAc...) asparagine glycan is linked to Asn-27. The 76-residue stretch at 64–139 (TSKCLLLKAR…TDKGDQSLRC (76 aa)) folds into the Thyroglobulin type-1 domain. Intrachain disulfides connect Cys-67/Cys-102, Cys-113/Cys-119, and Cys-121/Cys-139. The N-linked (GlcNAc...) asparagine glycan is linked to Asn-114. N-linked (GlcNAc...) asparagine glycans are attached at residues Asn-162 and Asn-202. Residues 271–291 (VIAVIAVVSVAVVAGVVVLVV) form a helical membrane-spanning segment. The Cytoplasmic segment spans residues 292–317 (TKRRKSGKYKKVELKELGEMRSEPSL).

The protein belongs to the EPCAM family. Expressed in kidney, lung, ovary and testis. High levels of expression in immortalized keratinocytes.

The protein localises to the membrane. May function as a growth factor receptor. The chain is Tumor-associated calcium signal transducer 2 (Tacstd2) from Mus musculus (Mouse).